Reading from the N-terminus, the 158-residue chain is Crossover junction endodeoxyribonuclease RuvC (158 aa).

Residues aspartate 7, glutamate 66, and aspartate 139 contribute to the active site. Mg(2+) contacts are provided by aspartate 7, glutamate 66, and aspartate 139.

The protein belongs to the RuvC family. As to quaternary structure, homodimer which binds Holliday junction (HJ) DNA. The HJ becomes 2-fold symmetrical on binding to RuvC with unstacked arms; it has a different conformation from HJ DNA in complex with RuvA. In the full resolvosome a probable DNA-RuvA(4)-RuvB(12)-RuvC(2) complex forms which resolves the HJ. It depends on Mg(2+) as a cofactor.

The protein resides in the cytoplasm. The catalysed reaction is Endonucleolytic cleavage at a junction such as a reciprocal single-stranded crossover between two homologous DNA duplexes (Holliday junction).. Functionally, the RuvA-RuvB-RuvC complex processes Holliday junction (HJ) DNA during genetic recombination and DNA repair. Endonuclease that resolves HJ intermediates. Cleaves cruciform DNA by making single-stranded nicks across the HJ at symmetrical positions within the homologous arms, yielding a 5'-phosphate and a 3'-hydroxyl group; requires a central core of homology in the junction. The consensus cleavage sequence is 5'-(A/T)TT(C/G)-3'. Cleavage occurs on the 3'-side of the TT dinucleotide at the point of strand exchange. HJ branch migration catalyzed by RuvA-RuvB allows RuvC to scan DNA until it finds its consensus sequence, where it cleaves and resolves the cruciform DNA. The polypeptide is Crossover junction endodeoxyribonuclease RuvC (Campylobacter hominis (strain ATCC BAA-381 / DSM 21671 / CCUG 45161 / LMG 19568 / NCTC 13146 / CH001A)).